The sequence spans 432 residues: ATP-dependent RNA helicase RhlB (432 aa).

Residues 9–37 carry the Q motif motif; sequence QNFADLGLQPQVIDGLNAKGFIKCTPIQA. A Helicase ATP-binding domain is found at 40–219; the sequence is LPVLLAGQDI…FEHMQEPEHV (180 aa). An ATP-binding site is contributed by 53 to 60; it reads AQTGTGKT. The DEAD box motif lies at 165 to 168; it reads DEAD. In terms of domain architecture, Helicase C-terminal spans 245–390; sequence ALLQTLIEEE…QSDYDASALL (146 aa). Positions 397 to 432 are disordered; that stretch reads LRLQRRPQQNRRNNNGQRQGGNRKHSRPRQPRNTQS. Over residues 417–426 the composition is skewed to basic residues; sequence GNRKHSRPRQ.

The protein belongs to the DEAD box helicase family. RhlB subfamily. Component of the RNA degradosome, which is a multiprotein complex involved in RNA processing and mRNA degradation.

The protein localises to the cytoplasm. The catalysed reaction is ATP + H2O = ADP + phosphate + H(+). In terms of biological role, DEAD-box RNA helicase involved in RNA degradation. Has RNA-dependent ATPase activity and unwinds double-stranded RNA. In Aliivibrio fischeri (strain MJ11) (Vibrio fischeri), this protein is ATP-dependent RNA helicase RhlB.